The chain runs to 200 residues: High mobility group protein 1 homolog (200 aa).

2 consecutive DNA-binding regions (HMG box) follow at residues Pro11–Lys81 and Pro100–Lys168. Residues Glu64–Glu86 are compositionally biased toward basic and acidic residues. 2 disordered regions span residues Glu64–Asn103 and Ala169–Asp200. Residues Ser190–Asp200 show a composition bias toward acidic residues.

Belongs to the HMGB family.

It localises to the nucleus. Its subcellular location is the chromosome. Functionally, binds preferentially single-stranded DNA and unwinds double-stranded DNA. In Strongylocentrotus purpuratus (Purple sea urchin), this protein is High mobility group protein 1 homolog (HMG1).